The primary structure comprises 161 residues: Nucleotide-binding protein Dtpsy_2240 (161 aa).

It belongs to the YajQ family.

Nucleotide-binding protein. The chain is Nucleotide-binding protein Dtpsy_2240 from Acidovorax ebreus (strain TPSY) (Diaphorobacter sp. (strain TPSY)).